The chain runs to 398 residues: MEIGTPLFEGAKKLLWLGGGELGKEMVIEAQRMGVETVVIDRYDLAPAMHVAHRKYVVNMHDGGAIESIIRKERPDAVIAEIEAINTETLSKIEMDGIKVMPNARAVKICMDRIELRRFAAEKVKVPTTAYGFATSPEEVKKMCKDVGYPCIIKPQMSSSGHGHEVIYDESQVEEKFKEALTHARGKSKTVIVEEYVKIDRELTVLTYRYPLSSGGVATKTIYPVEHQRPQGVYHYIESWHPATVSQDVISKASEYATKVVNELGGFGIFGVEIMIAGNRVLFNEVAPRPHDTGLVTLVSSDISEFQVHVRSALGLPTPDVKVVTPAAAHVILASGEKWAPKYINVDKALEIPGVQVRLFGKPVTYNERRMGIVLATGNSVEEAKEKVRKASALILVS.

Residues 21-22 (EL) and Glu81 contribute to the N(1)-(5-phospho-beta-D-ribosyl)glycinamide site. Residues Arg113, Lys154, 194-197 (EEYV), and Glu202 contribute to the ATP site. The region spanning 118-314 (RFAAEKVKVP…EFQVHVRSAL (197 aa)) is the ATP-grasp domain. Mg(2+)-binding residues include Glu273 and Glu285. Residues Asp292, Lys362, and 369-370 (RR) contribute to the N(1)-(5-phospho-beta-D-ribosyl)glycinamide site.

Belongs to the PurK/PurT family. In terms of assembly, homodimer.

It carries out the reaction N(1)-(5-phospho-beta-D-ribosyl)glycinamide + formate + ATP = N(2)-formyl-N(1)-(5-phospho-beta-D-ribosyl)glycinamide + ADP + phosphate + H(+). Its pathway is purine metabolism; IMP biosynthesis via de novo pathway; N(2)-formyl-N(1)-(5-phospho-D-ribosyl)glycinamide from N(1)-(5-phospho-D-ribosyl)glycinamide (formate route): step 1/1. Involved in the de novo purine biosynthesis. Catalyzes the transfer of formate to 5-phospho-ribosyl-glycinamide (GAR), producing 5-phospho-ribosyl-N-formylglycinamide (FGAR). Formate is provided by PurU via hydrolysis of 10-formyl-tetrahydrofolate. This Sulfolobus acidocaldarius (strain ATCC 33909 / DSM 639 / JCM 8929 / NBRC 15157 / NCIMB 11770) protein is Formate-dependent phosphoribosylglycinamide formyltransferase.